Consider the following 166-residue polypeptide: MSTVGLFHFPTPLTRICPAPWGLRLWEKLTLLSPGIAVTPVQMAGKKDYPALLSLDENELEEQFVKGHGPGGQATNKTSNCVVLKHIPSGIVVKCHQTRSVDQNRKLARKILQEKVDVFYNGENSPVHKEKREAAKKKQERKKRAKETLEKKKLLKELWESSKKVH.

Residues 1 to 35 constitute a mitochondrion transit peptide; that stretch reads MSTVGLFHFPTPLTRICPAPWGLRLWEKLTLLSPG. The interval 57–121 is GGQ domain; it reads ENELEEQFVK…LQEKVDVFYN (65 aa). The GGQ signature appears at 71 to 73; sequence GGQ. The residue at position 73 (glutamine 73) is an N5-methylglutamine. Residues 122 to 148 form a disordered region; that stretch reads GENSPVHKEKREAAKKKQERKKRAKET. The span at 126–137 shows a compositional bias: basic and acidic residues; that stretch reads PVHKEKREAAKK. Positions 127-160 form a coiled coil; it reads VHKEKREAAKKKQERKKRAKETLEKKKLLKELWE.

It belongs to the prokaryotic/mitochondrial release factor family. Interacts (via C-terminus) with MTRES1 (via S4 domain). Associates with mitoribosomal S39 large subunit, peptidyl tRNA and nascent chain. Post-translationally, methylation of glutamine in the GGQ triplet by HEMK1. Expressed in all areas of the brain tested.

Its subcellular location is the mitochondrion. In terms of biological role, part of a mitoribosome-associated quality control pathway that prevents aberrant translation by responding to interruptions during elongation. As heterodimer with MTRES1, ejects the unfinished nascent chain and peptidyl transfer RNA (tRNA), respectively, from stalled ribosomes. Recruitment of mitoribosome biogenesis factors to these quality control intermediates suggests additional roles for MTRES1 and MTRF during mitoribosome rescue. This is Mitochondrial translation release factor in rescue from Homo sapiens (Human).